The primary structure comprises 428 residues: Cytochrome bc complex cytochrome b subunit (428 aa).

2 stretches are compositionally biased toward low complexity: residues 1–15 and 21–52; these read MAEN…TAPA and APGA…AAAP. Residues 1–72 are disordered; that stretch reads MAENTPKPAA…RPDPNPFKDS (72 aa). The span at 59-72 shows a compositional bias: basic and acidic residues; it reads PPVDRPDPNPFKDS. A helical transmembrane segment spans residues 110 to 130; the sequence is YFGGLGLFFFVIQILTGLLLL. Histidine 161 and histidine 175 together coordinate heme b. Helical transmembrane passes span 162 to 182, 193 to 213, 260 to 280, 312 to 331, 369 to 389, and 401 to 421; these read AWSA…TFFM, WVSG…GYLL, LHVV…LTLV, GIGW…MFPW, ELLA…VPFI, and IFTI…YRVY. Residues histidine 261 and histidine 276 each coordinate heme b.

This sequence belongs to the cytochrome b family. It depends on heme b as a cofactor.

The protein localises to the cell inner membrane. In terms of biological role, component of the green S-bacteria bc complex, which consists of the Rieske protein and cytochrome b subunit but appears to lack a cytochrome c1-equivalent. This complex has a comparatively low redox potential. In Chlorobaculum thiosulfatiphilum (Chlorobium limicola f.sp. thiosulfatophilum), this protein is Cytochrome bc complex cytochrome b subunit (petB).